Here is a 142-residue protein sequence, read N- to C-terminus: Photosystem II extrinsic protein U (142 aa).

A signal peptide spans 1–29 (MKGLVRLLTVFSLLLGCWGWLGTTQIAQA).

It belongs to the PsbU family. In terms of assembly, PSII is composed of 1 copy each of membrane proteins PsbA, PsbB, PsbC, PsbD, PsbE, PsbF, PsbH, PsbI, PsbJ, PsbK, PsbL, PsbM, PsbT, PsbX, PsbY, PsbZ, Psb30/Ycf12, peripheral proteins PsbO, CyanoQ (PsbQ), PsbU, PsbV and a large number of cofactors. It forms dimeric complexes.

Its subcellular location is the cellular thylakoid membrane. In terms of biological role, one of the extrinsic, lumenal subunits of photosystem II (PSII). PSII is a light-driven water plastoquinone oxidoreductase, using light energy to abstract electrons from H(2)O, generating a proton gradient subsequently used for ATP formation. The extrinsic proteins stabilize the structure of photosystem II oxygen-evolving complex (OEC), the ion environment of oxygen evolution and protect the OEC against heat-induced inactivation. The polypeptide is Photosystem II extrinsic protein U (Trichormus variabilis (strain ATCC 29413 / PCC 7937) (Anabaena variabilis)).